A 430-amino-acid chain; its full sequence is Crotonyl-CoA carboxylase/reductase (430 aa).

It belongs to the zinc-containing alcohol dehydrogenase family. Crotonyl-CoA carboxylase/reductase subfamily. Homodimer. Despite some sequence similarity to zinc-containing alcohol dehydrogenases, this enzyme does not bind any metals. serves as cofactor.

It catalyses the reaction (2S)-ethylmalonyl-CoA + NADP(+) = (2E)-butenoyl-CoA + CO2 + NADPH. The catalysed reaction is (S)-methylmalonyl-CoA + NADP(+) = acryloyl-CoA + CO2 + NADPH. It carries out the reaction butanoyl-CoA + NADP(+) = (2E)-butenoyl-CoA + NADPH + H(+). Its function is as follows. Catalyzes the NADPH-dependent reductive carboxylation of crotonyl-CoA ((2E)-butenoyl-CoA) to (2S)-ethylmalonyl-CoA, in the presence of CO2. This is a key reaction in the ethylmalonyl-CoA pathway for acetyl-CoA assimilation required for R.sphaeroides growth on acetate as sole carbon source. Is also able to accept acryloyl-CoA as an alternative substrate, yielding (2S)-methylmalonyl-CoA. To a lesser extent, when CO2 is absent, the enzyme also catalyzes the reduction of crotonyl-CoA to butanoyl-CoA. The protein is Crotonyl-CoA carboxylase/reductase of Cereibacter sphaeroides (strain ATCC 17023 / DSM 158 / JCM 6121 / CCUG 31486 / LMG 2827 / NBRC 12203 / NCIMB 8253 / ATH 2.4.1.) (Rhodobacter sphaeroides).